A 147-amino-acid chain; its full sequence is Large ribosomal subunit protein bL9 (147 aa).

The protein belongs to the bacterial ribosomal protein bL9 family.

Functionally, binds to the 23S rRNA. The chain is Large ribosomal subunit protein bL9 from Caldanaerobacter subterraneus subsp. tengcongensis (strain DSM 15242 / JCM 11007 / NBRC 100824 / MB4) (Thermoanaerobacter tengcongensis).